A 483-amino-acid chain; its full sequence is GTPase Der (483 aa).

EngA-type G domains follow at residues 3–167 (FTLA…GEER) and 212–387 (LRIA…EIWN). GTP is bound by residues 9–16 (GRPNVGKS), 56–60 (DTAGL), 119–122 (NKAE), 218–225 (GRPNAGKS), 265–269 (DTAGM), and 330–333 (NKWD). Positions 388 to 472 (RRISTGRLNR…PIRLSLRTSD (85 aa)) constitute a KH-like domain.

It belongs to the TRAFAC class TrmE-Era-EngA-EngB-Septin-like GTPase superfamily. EngA (Der) GTPase family. As to quaternary structure, associates with the 50S ribosomal subunit.

GTPase that plays an essential role in the late steps of ribosome biogenesis. This is GTPase Der from Brucella ovis (strain ATCC 25840 / 63/290 / NCTC 10512).